We begin with the raw amino-acid sequence, 207 residues long: High frequency lysogenization protein HflD homolog (207 aa).

It belongs to the HflD family.

It localises to the cytoplasm. The protein localises to the cell inner membrane. The sequence is that of High frequency lysogenization protein HflD homolog from Pseudomonas fluorescens (strain ATCC BAA-477 / NRRL B-23932 / Pf-5).